The sequence spans 516 residues: MEPAVSLAVCALLFLLWVRVKGLEFVLIHQRWVFVCLFLLPLSLIFDIYYYVRAWVVFKLSSAPRLHEQRVRDIQKQVREWKEQGSKTFMCTGRPGWLTVSLRVGKYKKTHKNIMINLMDILEVDTKKQIVRVEPLVTMGQVTALLTSIGWTLPVLPELDDLTVGGLIMGTGIESSSHKYGLFQHICTAYELVLADGSFVRCTPSENSDLFYAVPWSCGTLGFLVAAEIRIIPAKKYVKLRFEPVQGLEAICAKFTHESQRQENHFVEGLLYSLDEAVIMTGVMTDEVEPSKLNSIGNYYKPWFFKHVENYLKTNREGLEYIPLRHYYHRHTRSIFWELQDIIPFGNNPIFRYLFGWMVPPKISLLKLTQGETLRKLYEQHHVVQDMLVPMKCLQQALHTFQNDIHVYPIWLCPFILPSQPGLVHPKGNEAELYIDIGAYGEPRVKHFEARSCMRQLEKFVRSVHGFQMLYADCYMNREEFWEMFDGSLYHKLREKLGCQDAFPEVYDKICKAARH.

Positions 1–22 (MEPAVSLAVCALLFLLWVRVKG) are cleaved as a signal peptide. Residues 23-31 (LEFVLIHQR) are Lumenal-facing. Residues 32-52 (WVFVCLFLLPLSLIFDIYYYV) form a helical membrane-spanning segment. Over 53–516 (RAWVVFKLSS…YDKICKAARH (464 aa)) the chain is Cytoplasmic. The FAD-binding PCMH-type domain occupies 58-234 (FKLSSAPRLH…VAAEIRIIPA (177 aa)). FAD is bound at residue 163–175 (TVGGLIMGTGIES).

Belongs to the FAD-binding oxidoreductase/transferase type 4 family. In terms of assembly, interacts with DHCR7; this interaction regulates DHCR7 activity. FAD is required as a cofactor.

Its subcellular location is the endoplasmic reticulum membrane. The protein localises to the golgi apparatus membrane. It carries out the reaction cholesterol + NADP(+) = desmosterol + NADPH + H(+). The catalysed reaction is lanosterol + NADPH + H(+) = 24,25-dihydrolanosterol + NADP(+). It catalyses the reaction 5alpha-cholest-8-en-3beta-ol + NADP(+) = zymosterol + NADPH + H(+). It participates in steroid biosynthesis; cholesterol biosynthesis. In terms of biological role, catalyzes the reduction of the delta-24 double bond of sterol intermediates during cholesterol biosynthesis. In addition to its cholesterol-synthesizing activity, can protect cells from oxidative stress by reducing caspase 3 activity during apoptosis induced by oxidative stress. Also protects against amyloid-beta peptide-induced apoptosis. This chain is Delta(24)-sterol reductase (DHCR24), found in Macaca fascicularis (Crab-eating macaque).